Reading from the N-terminus, the 553-residue chain is Formate--tetrahydrofolate ligase (553 aa).

62 to 69 provides a ligand contact to ATP; that stretch reads TPAGEGKS.

Belongs to the formate--tetrahydrofolate ligase family.

It catalyses the reaction (6S)-5,6,7,8-tetrahydrofolate + formate + ATP = (6R)-10-formyltetrahydrofolate + ADP + phosphate. It functions in the pathway one-carbon metabolism; tetrahydrofolate interconversion. The polypeptide is Formate--tetrahydrofolate ligase (Pediococcus pentosaceus (strain ATCC 25745 / CCUG 21536 / LMG 10740 / 183-1w)).